A 463-amino-acid polypeptide reads, in one-letter code: Elongation factor 1-alpha 1 (463 aa).

The 238-residue stretch at 5–242 (KIHINIVVIG…DAILPPARPT (238 aa)) folds into the tr-type G domain. A G1 region spans residues 14 to 21 (GHVDSGKS). 14–21 (GHVDSGKS) serves as a coordination point for GTP. The interval 70–74 (GITID) is G2. The interval 91-94 (DAPG) is G3. GTP-binding positions include 91-95 (DAPGH) and 153-156 (NKMD). Residues 153–156 (NKMD) form a G4 region. Positions 194–196 (SGW) are G5. Glu301 and Glu374 each carry 5-glutamyl glycerylphosphorylethanolamine.

It belongs to the TRAFAC class translation factor GTPase superfamily. Classic translation factor GTPase family. EF-Tu/EF-1A subfamily.

The protein localises to the cytoplasm. Its function is as follows. This protein promotes the GTP-dependent binding of aminoacyl-tRNA to the A-site of ribosomes during protein biosynthesis. The sequence is that of Elongation factor 1-alpha 1 from Drosophila melanogaster (Fruit fly).